A 459-amino-acid polypeptide reads, in one-letter code: Vacuolar cation/proton exchanger 3 (459 aa).

Residues 1–67 (MGSIVEPWAA…TLKNILSNLQ (67 aa)) lie on the Cytoplasmic side of the membrane. Residues 68–88 (EVILGTKLTLLFLAIPLAILA) form a helical membrane-spanning segment. Topologically, residues 89-95 (NSYNYGR) are extracellular. A helical transmembrane segment spans residues 96–116 (PLIFGLSLIGLTPLAERVSFL). The Cytoplasmic segment spans residues 117–129 (TEQLAFYTGPTVG). Residues 130–150 (GLLNATCGNATELIIAILALA) form a helical membrane-spanning segment. The cation selection stretch occupies residues 137–172 (GNATELIIAILALANNKVAVVKYSLLGSILSNLLLV). The Extracellular segment spans residues 151–161 (NNKVAVVKYSL). The helical transmembrane segment at 162 to 182 (LGSILSNLLLVLGTSLFFGGI) threads the bilayer. The Cytoplasmic portion of the chain corresponds to 183-195 (ANIRREQRFDRKQ). The helical transmembrane segment at 196 to 216 (ADVNFFLLLMGLLCHLLPLLL) threads the bilayer. Topologically, residues 217–238 (KYAATGEVSTSMINKMSLTLSR) are extracellular. Residues 239-259 (TSSIVMLIAYIAYLIFQLWTH) form a helical membrane-spanning segment. At 260 to 283 (RQLFEAQQDDDDAYDDEVSVEETP) the chain is on the cytoplasmic side. Residues 284–304 (VIGFWSGFAWLVGMTIVIALL) form a helical membrane-spanning segment. At 305-327 (SEYVVDTIEDASDSWGLSVSFIS) the chain is on the extracellular side. Residues 328–348 (IILLPIVGNAAEHAGAIIFAF) form a helical membrane-spanning segment. Positions 335–370 (GNAAEHAGAIIFAFKNKLDISLGVALGSATQISLFV) are cation selection. Over 349–362 (KNKLDISLGVALGS) the chain is Cytoplasmic. The chain crosses the membrane as a helical span at residues 363-383 (ATQISLFVVPLSVIVAWILGI). Over 384 to 386 (KMD) the chain is Extracellular. A helical transmembrane segment spans residues 387-407 (LNFNILETSSLALAIIITAFT). At 408-417 (LQDGTSHYMK) the chain is on the cytoplasmic side. Residues 418–438 (GLVLLLCYVIIAACFFVDQIP) form a helical membrane-spanning segment. Topologically, residues 439-459 (QPNDLDVGLQPMNNLGEVFSA) are extracellular.

The protein belongs to the Ca(2+):cation antiporter (CaCA) (TC 2.A.19) family. Cation/proton exchanger (CAX) subfamily. Expressed in roots, stems and flowers.

Its subcellular location is the vacuole membrane. Inhibited by excess of Ca(2+). Vacuolar cation/proton exchanger (CAX). Translocates Ca(2+) and other metal ions into vacuoles using the proton gradient formed by H(+)-ATPase and H(+)-pyrophosphatase. Involved in ion homeostasis in association with CAX1. In Arabidopsis thaliana (Mouse-ear cress), this protein is Vacuolar cation/proton exchanger 3 (CAX3).